The sequence spans 637 residues: Glutamate--cysteine ligase catalytic subunit (637 aa).

Met1 is modified (N-acetylmethionine). 2 positions are modified to phosphoserine: Ser5 and Ser8.

This sequence belongs to the glutamate--cysteine ligase type 3 family. In terms of assembly, heterodimer of a catalytic heavy chain and a regulatory light chain.

It carries out the reaction L-cysteine + L-glutamate + ATP = gamma-L-glutamyl-L-cysteine + ADP + phosphate + H(+). It catalyses the reaction (2S)-2-aminobutanoate + L-glutamate + ATP = gamma-L-glutamyl-(2S)-2-aminobutanoate + ADP + phosphate + H(+). It participates in sulfur metabolism; glutathione biosynthesis; glutathione from L-cysteine and L-glutamate: step 1/2. With respect to regulation, feedback inhibition by glutathione. Catalyzes the ATP-dependent ligation of L-glutamate and L-cysteine and participates in the first and rate-limiting step in glutathione biosynthesis. In Mus musculus (Mouse), this protein is Glutamate--cysteine ligase catalytic subunit.